The chain runs to 431 residues: Adenylosuccinate lyase (431 aa).

N(6)-(1,2-dicarboxyethyl)-AMP contacts are provided by residues 4–5 (RY), 67–69 (RHD), and 93–94 (TS). His-141 acts as the Proton donor/acceptor in catalysis. Residue Gln-212 participates in N(6)-(1,2-dicarboxyethyl)-AMP binding. Residue Ser-262 is the Proton donor/acceptor of the active site. N(6)-(1,2-dicarboxyethyl)-AMP is bound by residues Ser-263, 268 to 270 (KRN), Asn-276, and 307 to 311 (SAERI).

The protein belongs to the lyase 1 family. Adenylosuccinate lyase subfamily. As to quaternary structure, homodimer and homotetramer. Residues from neighboring subunits contribute catalytic and substrate-binding residues to each active site.

It catalyses the reaction N(6)-(1,2-dicarboxyethyl)-AMP = fumarate + AMP. The enzyme catalyses (2S)-2-[5-amino-1-(5-phospho-beta-D-ribosyl)imidazole-4-carboxamido]succinate = 5-amino-1-(5-phospho-beta-D-ribosyl)imidazole-4-carboxamide + fumarate. It participates in purine metabolism; AMP biosynthesis via de novo pathway; AMP from IMP: step 2/2. It functions in the pathway purine metabolism; IMP biosynthesis via de novo pathway; 5-amino-1-(5-phospho-D-ribosyl)imidazole-4-carboxamide from 5-amino-1-(5-phospho-D-ribosyl)imidazole-4-carboxylate: step 2/2. Its function is as follows. Catalyzes two reactions in de novo purine nucleotide biosynthesis. Catalyzes the breakdown of 5-aminoimidazole- (N-succinylocarboxamide) ribotide (SAICAR or 2-[5-amino-1-(5-phospho-beta-D-ribosyl)imidazole-4-carboxamido]succinate) to 5-aminoimidazole-4-carboxamide ribotide (AICAR or 5-amino-1-(5-phospho-beta-D-ribosyl)imidazole-4-carboxamide) and fumarate, and of adenylosuccinate (ADS or N(6)-(1,2-dicarboxyethyl)-AMP) to adenosine monophosphate (AMP) and fumarate. The polypeptide is Adenylosuccinate lyase (purB) (Staphylococcus haemolyticus (strain JCSC1435)).